We begin with the raw amino-acid sequence, 499 residues long: Potassium voltage-gated channel subfamily A member 2 (499 aa).

The segment at 1-26 (MTVATGDPVDEAAALPGHPQDTYDPE) is disordered. Positions 1-125 (MTVATGDPVD…YELGEEAMEM (125 aa)) are tetramerization domain. Over 1 to 160 (MTVATGDPVD…LLFEYPESSG (160 aa)) the chain is Cytoplasmic. A helical transmembrane segment spans residues 161–182 (PARIIAIVSVMVILISIVSFCL). Topologically, residues 183–221 (ETLPIFRDENEDMHGGGVTFHTYSNSTIGYQQSTSFTDP) are extracellular. The N-linked (GlcNAc...) asparagine glycan is linked to Asn207. The helical transmembrane segment at 222–243 (FFIVETLCIIWFSFEFLVRFFA) threads the bilayer. Residue Cys244 is the site of S-palmitoyl cysteine attachment. Topologically, residues 244–254 (CPSKAGFFTNI) are cytoplasmic. A helical transmembrane segment spans residues 255–275 (MNIIDIVAIIPYFITLGTELA). Residues 276-289 (EKPEDAQQGQQAMS) lie on the Extracellular side of the membrane. The chain crosses the membrane as a helical; Voltage-sensor span at residues 290 to 310 (LAILRVIRLVRVFRIFKLSRH). Topologically, residues 311-325 (SKGLQILGQTLKASM) are cytoplasmic. The S4-S5 linker stretch occupies residues 312–325 (KGLQILGQTLKASM). A helical transmembrane segment spans residues 326-347 (RELGLLIFFLFIGVILFSSAVY). Over 348–361 (FAEADERDSQFPSI) the chain is Extracellular. An intramembrane region (helical) is located at residues 362-373 (PDAFWWAVVSMT). The short motif at 374–379 (TVGYGD) is the Selectivity filter element. An intramembrane segment occupies 374–381 (TVGYGDMV). Residues 382 to 388 (PTTIGGK) are Extracellular-facing. Residues 389 to 417 (IVGSLCAIAGVLTIALPVPVIVSNFNYFY) traverse the membrane as a helical segment. At 418–499 (HRETEGEEQA…VNITKMLTDV (82 aa)) the chain is on the cytoplasmic side. A Phosphotyrosine modification is found at Tyr429. 4 positions are modified to phosphoserine: Ser434, Ser440, Ser441, and Ser449. At Tyr458 the chain carries Phosphotyrosine. Phosphoserine is present on Ser468. Positions 497 to 499 (TDV) match the PDZ-binding motif.

The protein belongs to the potassium channel family. A (Shaker) (TC 1.A.1.2) subfamily. Kv1.2/KCNA2 sub-subfamily. Homotetramer and heterotetramer with other channel-forming alpha subunits, such as KCNA1, KCNA4, KCNA5, KCNA6 and KCNA7. Channel activity is regulated by interaction with beta subunits, including KCNAB1 and KCNAB2. Identified in a complex with KCNA1 and KCNAB2. Identified in a complex with KCNA5 and KCNAB1. Identified in a complex with KCNA4 and FYN. Interacts with PTK2B. Interacts (via C-terminus) with CTTN. Interacts with ADAM22. Interacts with CNTNAP2. Interacts (via C-terminus) with the PDZ domains of DLG1, DLG2 and DLG4. Interacts (via N-terminal cytoplasmic domain) with RHOA (GTP-bound form); this regulates channel activity by reducing location at the cell surface in response to CHRM1 activation. Interacts with DRD2. Interacts with SIGMAR1; cocaine consumption leads to increased interaction. Interacts with ADAM11. Interacts with LYNX1. Post-translationally, phosphorylated on tyrosine residues; phosphorylation increases in response to ischemia. Phosphorylated on tyrosine residues by activated PTK2B/PYK2. Phosphorylation on tyrosine residues suppresses ion channel activity. Phosphorylated on tyrosine residues in response to CHRM1 activation; this abolishes interaction with CTTN. This is probably due to endocytosis of the phosphorylated channel subunits. Phosphorylated on serine residues in response to increased cAMP levels; phosphorylation is apparently not catalyzed by PKA. In terms of processing, N-glycosylated, with complex, sialylated N-glycans. In terms of tissue distribution, detected in brain. Detected in cerebellum. Detected in mitral cells in the olfactory bulb. Detected in cochlea. Detected in cerebellum, particularly in the basket cell axon plexus and in the terminal regions around Purkinje cells (at protein level). Detected in juxtaparanodal regions in sciatic nerve. Detected in Schwann cells from sciatic nerve. Detected in dopamine neurons in substantia nigra. Detected in large myelinated fibers in juxtaparanodes in the CA3 and CA1 areas of the hippocampus. Detected in brain, in punctae on fiber tracts in brain stem and spinal cord, and on axons in the juxtaparanodal regions of the node of Ranvier (at protein level). Detected in dopamine neurons in the midbrain.

The protein resides in the cell membrane. It localises to the membrane. The protein localises to the cell projection. Its subcellular location is the axon. It is found in the synapse. The protein resides in the endoplasmic reticulum membrane. It localises to the lamellipodium membrane. The protein localises to the synaptosome. Its subcellular location is the presynaptic cell membrane. It is found in the dendrite. The protein resides in the perikaryon. It localises to the cell junction. The protein localises to the paranodal septate junction. The enzyme catalyses K(+)(in) = K(+)(out). Inhibited by 4-aminopyridine (4-AP), dendrotoxin (DTX) and charybdotoxin (CTX), but not by tetraethylammonium (TEA). Inhibited by tityustoxin-K alpha (TsTX-Kalpha), a toxin that is highly specific for KCNA2. Inhibited by maurotoxin. Inhibited by kappaM conotoxins kappaM-RIIIJ and kappaM-RIIIK. Functionally, voltage-gated potassium channel that mediates transmembrane potassium transport in excitable membranes, primarily in the brain and the central nervous system, but also in the cardiovascular system. Prevents aberrant action potential firing and regulates neuronal output. Forms tetrameric potassium-selective channels through which potassium ions pass in accordance with their electrochemical gradient. The channel alternates between opened and closed conformations in response to the voltage difference across the membrane. Can form functional homotetrameric channels and heterotetrameric channels that contain variable proportions of KCNA1, KCNA2, KCNA4, KCNA5, KCNA6, KCNA7, and possibly other family members as well; channel properties depend on the type of alpha subunits that are part of the channel. Channel properties are modulated by cytoplasmic beta subunits that regulate the subcellular location of the alpha subunits and promote rapid inactivation of delayed rectifier potassium channels. In vivo, membranes probably contain a mixture of heteromeric potassium channel complexes, making it difficult to assign currents observed in intact tissues to any particular potassium channel family member. Homotetrameric KCNA2 forms a delayed-rectifier potassium channel that opens in response to membrane depolarization, followed by slow spontaneous channel closure. In contrast, a heteromultimer formed by KCNA2 and KCNA4 shows rapid inactivation. Contributes to the regulation of action potentials in neurons. KCNA2-containing channels play a presynaptic role and prevent hyperexcitability and aberrant action potential firing. Response to toxins that are selective for KCNA1, respectively for KCNA2, suggests that heteromeric potassium channels composed of both KCNA1 and KCNA2 play a role in pacemaking and regulate the output of deep cerebellar nuclear neurons. Response to toxins that are selective for KCNA2-containing potassium channels suggests that in Purkinje cells, dendritic subthreshold KCNA2-containing potassium channels prevent random spontaneous calcium spikes, suppressing dendritic hyperexcitability without hindering the generation of somatic action potentials, and thereby play an important role in motor coordination. KCNA2-containing channels play a role in GABAergic transmission from basket cells to Purkinje cells in the cerebellum, and thereby play an import role in motor coordination. Plays a role in the induction of long-term potentiation of neuron excitability in the CA3 layer of the hippocampus. May function as down-stream effector for G protein-coupled receptors and inhibit GABAergic inputs to basolateral amygdala neurons. May contribute to the regulation of neurotransmitter release, such as gamma-aminobutyric acid (GABA). Contributes to the regulation of the axonal release of the neurotransmitter dopamine. Reduced KCNA2 expression plays a role in the perception of neuropathic pain after peripheral nerve injury, but not acute pain. Plays a role in the regulation of the time spent in non-rapid eye movement (NREM) sleep. This chain is Potassium voltage-gated channel subfamily A member 2 (Kcna2), found in Mus musculus (Mouse).